A 69-amino-acid polypeptide reads, in one-letter code: DNA-directed RNA polymerase subunit omega (69 aa).

This sequence belongs to the RNA polymerase subunit omega family. The RNAP catalytic core consists of 2 alpha, 1 beta, 1 beta' and 1 omega subunit. When a sigma factor is associated with the core the holoenzyme is formed, which can initiate transcription.

The catalysed reaction is RNA(n) + a ribonucleoside 5'-triphosphate = RNA(n+1) + diphosphate. Promotes RNA polymerase assembly. Latches the N- and C-terminal regions of the beta' subunit thereby facilitating its interaction with the beta and alpha subunits. The polypeptide is DNA-directed RNA polymerase subunit omega (Hahella chejuensis (strain KCTC 2396)).